A 1770-amino-acid polypeptide reads, in one-letter code: Transposon Ty2-GR1 Gag-Pol polyprotein (1770 aa).

3 stretches are compositionally biased toward polar residues: residues 1–11 (MESQQLHQNPH), 19–39 (ASVT…SASN), and 49–60 (KVNSQQETTPGT). Disordered regions lie at residues 1–86 (MESQ…GQYQ) and 360–453 (HSEY…LPDH). The tract at residues 295–397 (ENNINVSDRL…SSKPRAAKAH (103 aa)) is RNA-binding. Positions 369–381 (TSPNTTNTKVTTR) are enriched in low complexity. Residues 399-408 (IATSSKFSRV) show a composition bias toward polar residues. Asp457 (for protease activity; shared with dimeric partner) is an active-site residue. The interval 579-636 (NVNKSKSVNKYPYPLIHRMLGHANFRSIQKSLKKNAVTYLKESDIEWSNASTYQCPDC) is integrase-type zinc finger-like. The 176-residue stretch at 656-831 (ESYEPFQYLH…AGLDITTILP (176 aa)) folds into the Integrase catalytic domain. Mg(2+) is bound by residues Asp667 and Asp732. Disordered regions lie at residues 1004-1034 (MGGT…STNE), 1059-1135 (TEEP…KSSK), 1146-1165 (LPLP…VSKD), and 1170-1205 (HSRQ…TEIE). Polar residues-rich tracts occupy residues 1009-1034 (ESDT…STNE) and 1065-1082 (QRNS…STPS). The span at 1151–1165 (LTHKSPTDTSDVSKD) shows a compositional bias: basic and acidic residues. Positions 1193–1227 (KKRSLEDNETEIEVSRDTWNNKNMRSLEPPRSKKR) match the Bipartite nuclear localization signal motif. A Reverse transcriptase Ty1/copia-type domain is found at 1353-1491 (NDYYITQLDI…DILGLEIKYQ (139 aa)). Positions 1361, 1442, 1443, 1625, 1667, and 1700 each coordinate Mg(2+). One can recognise an RNase H Ty1/copia-type domain in the interval 1625–1767 (DASYGNQPYY…IKTFKLLTNK (143 aa)).

The capsid protein forms a homotrimer, from which the VLPs are assembled. The protease is a homodimer, whose active site consists of two apposed aspartic acid residues. Initially, virus-like particles (VLPs) are composed of the structural unprocessed proteins Gag and Gag-Pol, and also contain the host initiator methionine tRNA (tRNA(i)-Met) which serves as a primer for minus-strand DNA synthesis, and a dimer of genomic Ty RNA. Processing of the polyproteins occurs within the particle and proceeds by an ordered pathway, called maturation. First, the protease (PR) is released by autocatalytic cleavage of the Gag-Pol polyprotein, and this cleavage is a prerequisite for subsequent processing at the remaining sites to release the mature structural and catalytic proteins. Maturation takes place prior to the RT reaction and is required to produce transposition-competent VLPs.

The protein resides in the cytoplasm. Its subcellular location is the nucleus. It catalyses the reaction DNA(n) + a 2'-deoxyribonucleoside 5'-triphosphate = DNA(n+1) + diphosphate. The catalysed reaction is Endonucleolytic cleavage to 5'-phosphomonoester.. Its function is as follows. Capsid protein (CA) is the structural component of the virus-like particle (VLP), forming the shell that encapsulates the retrotransposons dimeric RNA genome. The particles are assembled from trimer-clustered units and there are holes in the capsid shells that allow for the diffusion of macromolecules. CA also has nucleocapsid-like chaperone activity, promoting primer tRNA(i)-Met annealing to the multipartite primer-binding site (PBS), dimerization of Ty2 RNA and initiation of reverse transcription. Functionally, the aspartyl protease (PR) mediates the proteolytic cleavages of the Gag and Gag-Pol polyproteins after assembly of the VLP. In terms of biological role, reverse transcriptase/ribonuclease H (RT) is a multifunctional enzyme that catalyzes the conversion of the retro-elements RNA genome into dsDNA within the VLP. The enzyme displays a DNA polymerase activity that can copy either DNA or RNA templates, and a ribonuclease H (RNase H) activity that cleaves the RNA strand of RNA-DNA heteroduplexes during plus-strand synthesis and hydrolyzes RNA primers. The conversion leads to a linear dsDNA copy of the retrotransposon that includes long terminal repeats (LTRs) at both ends. Integrase (IN) targets the VLP to the nucleus, where a subparticle preintegration complex (PIC) containing at least integrase and the newly synthesized dsDNA copy of the retrotransposon must transit the nuclear membrane. Once in the nucleus, integrase performs the integration of the dsDNA into the host genome. This is Transposon Ty2-GR1 Gag-Pol polyprotein (TY2B-GR1) from Saccharomyces cerevisiae (strain ATCC 204508 / S288c) (Baker's yeast).